Reading from the N-terminus, the 339-residue chain is MNNWKHNHVLDLSTFSLEDYKTVLELTTRFKDVHKSSSRKLPALHGRLIANLFFEPSTRTRTSFELAAKRLSADVQNFSVSSSSLNKGETPLDTILTYISMGADILVIRHESTNVPAELANYVDINNINTSILNAGDGFHSHPSQGLLDLFTLATFFNPNEPSTNSLLNKKITIVGDILHSRVARSNLWALTACGAEVTLCGPPSLLPEEFIDFVQNPPLGQNFDPINKRGSVFIKRSLKDALKNSDAVMTLRLQKERMKQNMLTDLDSYYVQYGITHESLKWCEKKVPVLHPGPVNRGVEISNRLVEDNSINLISKQVENGIPTRMALLYLLGLNKKD.

Arginine 59 and threonine 60 together coordinate carbamoyl phosphate. An L-aspartate-binding site is contributed by lysine 87. Residues arginine 109, histidine 142, and glutamine 145 each coordinate carbamoyl phosphate. 2 residues coordinate L-aspartate: arginine 182 and arginine 253. Carbamoyl phosphate-binding residues include glycine 294 and proline 295.

It belongs to the aspartate/ornithine carbamoyltransferase superfamily. ATCase family. As to quaternary structure, heterododecamer (2C3:3R2) of six catalytic PyrB chains organized as two trimers (C3), and six regulatory PyrI chains organized as three dimers (R2).

The enzyme catalyses carbamoyl phosphate + L-aspartate = N-carbamoyl-L-aspartate + phosphate + H(+). Its pathway is pyrimidine metabolism; UMP biosynthesis via de novo pathway; (S)-dihydroorotate from bicarbonate: step 2/3. Functionally, catalyzes the condensation of carbamoyl phosphate and aspartate to form carbamoyl aspartate and inorganic phosphate, the committed step in the de novo pyrimidine nucleotide biosynthesis pathway. This chain is Aspartate carbamoyltransferase catalytic subunit, found in Prochlorococcus marinus (strain NATL2A).